The primary structure comprises 397 residues: CCA-adding enzyme (397 aa).

The ATP site is built by Gly27 and Arg30. Gly27 and Arg30 together coordinate CTP. Mg(2+)-binding residues include Asp40 and Asp42. Residues Arg111, Asp154, Arg157, Arg160, and Arg163 each contribute to the ATP site. Residues Arg111, Asp154, Arg157, Arg160, and Arg163 each coordinate CTP.

Belongs to the tRNA nucleotidyltransferase/poly(A) polymerase family. Bacterial CCA-adding enzyme type 3 subfamily. In terms of assembly, homodimer. Requires Mg(2+) as cofactor.

It carries out the reaction a tRNA precursor + 2 CTP + ATP = a tRNA with a 3' CCA end + 3 diphosphate. It catalyses the reaction a tRNA with a 3' CCA end + 2 CTP + ATP = a tRNA with a 3' CCACCA end + 3 diphosphate. In terms of biological role, catalyzes the addition and repair of the essential 3'-terminal CCA sequence in tRNAs without using a nucleic acid template. Adds these three nucleotides in the order of C, C, and A to the tRNA nucleotide-73, using CTP and ATP as substrates and producing inorganic pyrophosphate. tRNA 3'-terminal CCA addition is required both for tRNA processing and repair. Also involved in tRNA surveillance by mediating tandem CCA addition to generate a CCACCA at the 3' terminus of unstable tRNAs. While stable tRNAs receive only 3'-terminal CCA, unstable tRNAs are marked with CCACCA and rapidly degraded. The protein is CCA-adding enzyme of Bacillus licheniformis (strain ATCC 14580 / DSM 13 / JCM 2505 / CCUG 7422 / NBRC 12200 / NCIMB 9375 / NCTC 10341 / NRRL NRS-1264 / Gibson 46).